We begin with the raw amino-acid sequence, 242 residues long: Aspartate/glutamate leucyltransferase (242 aa).

This sequence belongs to the R-transferase family. Bpt subfamily.

It localises to the cytoplasm. It catalyses the reaction N-terminal L-glutamyl-[protein] + L-leucyl-tRNA(Leu) = N-terminal L-leucyl-L-glutamyl-[protein] + tRNA(Leu) + H(+). The catalysed reaction is N-terminal L-aspartyl-[protein] + L-leucyl-tRNA(Leu) = N-terminal L-leucyl-L-aspartyl-[protein] + tRNA(Leu) + H(+). Its function is as follows. Functions in the N-end rule pathway of protein degradation where it conjugates Leu from its aminoacyl-tRNA to the N-termini of proteins containing an N-terminal aspartate or glutamate. The protein is Aspartate/glutamate leucyltransferase of Chromobacterium violaceum (strain ATCC 12472 / DSM 30191 / JCM 1249 / CCUG 213 / NBRC 12614 / NCIMB 9131 / NCTC 9757 / MK).